The sequence spans 115 residues: Large ribosomal subunit protein bL19 (115 aa).

Belongs to the bacterial ribosomal protein bL19 family.

This protein is located at the 30S-50S ribosomal subunit interface and may play a role in the structure and function of the aminoacyl-tRNA binding site. The sequence is that of Large ribosomal subunit protein bL19 from Lawsonia intracellularis (strain PHE/MN1-00).